Here is a 299-residue protein sequence, read N- to C-terminus: UDP-N-acetylenolpyruvoylglucosamine reductase (299 aa).

The 166-residue stretch at 27–192 folds into the FAD-binding PCMH-type domain; that stretch reads KSGGAADWLF…VGATFRGRPG (166 aa). Arg172 is an active-site residue. Residues 206–225 are disordered; the sequence is ASREASQPLRSRTGGSTFKN. Polar residues predominate over residues 208-224; sequence REASQPLRSRTGGSTFK. The active-site Proton donor is Ser221. Residue Glu291 is part of the active site.

Belongs to the MurB family. The cofactor is FAD.

The protein localises to the cytoplasm. The enzyme catalyses UDP-N-acetyl-alpha-D-muramate + NADP(+) = UDP-N-acetyl-3-O-(1-carboxyvinyl)-alpha-D-glucosamine + NADPH + H(+). It participates in cell wall biogenesis; peptidoglycan biosynthesis. Its function is as follows. Cell wall formation. The polypeptide is UDP-N-acetylenolpyruvoylglucosamine reductase (Sphingopyxis alaskensis (strain DSM 13593 / LMG 18877 / RB2256) (Sphingomonas alaskensis)).